We begin with the raw amino-acid sequence, 42 residues long: uncharacterized protein (42 aa).

A helical membrane pass occupies residues 5–27 (FLHTNITIIPHSVLYVSLSYYII).

The protein localises to the membrane. This is an uncharacterized protein from Saccharomyces cerevisiae (strain ATCC 204508 / S288c) (Baker's yeast).